Reading from the N-terminus, the 295-residue chain is Enolase-phosphatase E1 (295 aa).

Residues Asp-20 and Glu-22 each coordinate Mg(2+). Substrate-binding positions include 153–154 and Lys-187; that span reads SS. Mg(2+) is bound at residue Asp-212. The segment at 260 to 295 is disordered; it reads ETKEENGGATNGKRKIEETNDDVAEEDKAQVYPNKK.

It belongs to the HAD-like hydrolase superfamily. MasA/MtnC family. As to quaternary structure, monomer. Mg(2+) is required as a cofactor.

The protein resides in the cytoplasm. The protein localises to the nucleus. The catalysed reaction is 5-methylsulfanyl-2,3-dioxopentyl phosphate + H2O = 1,2-dihydroxy-5-(methylsulfanyl)pent-1-en-3-one + phosphate. It functions in the pathway amino-acid biosynthesis; L-methionine biosynthesis via salvage pathway; L-methionine from S-methyl-5-thio-alpha-D-ribose 1-phosphate: step 3/6. The protein operates within amino-acid biosynthesis; L-methionine biosynthesis via salvage pathway; L-methionine from S-methyl-5-thio-alpha-D-ribose 1-phosphate: step 4/6. Functionally, bifunctional enzyme that catalyzes the enolization of 2,3-diketo-5-methylthiopentyl-1-phosphate (DK-MTP-1-P) into the intermediate 2-hydroxy-3-keto-5-methylthiopentenyl-1-phosphate (HK-MTPenyl-1-P), which is then dephosphorylated to form the acireductone 1,2-dihydroxy-3-keto-5-methylthiopentene (DHK-MTPene). This Anopheles gambiae (African malaria mosquito) protein is Enolase-phosphatase E1.